The sequence spans 907 residues: Epidermal growth factor receptor substrate 15-like 1 (907 aa).

Alanine 2 carries the post-translational modification N-acetylalanine. Positions 15–104 constitute an EH 1 domain; it reads GNPLYESYYK…SLTMPPPKFH (90 aa). The interval 15–368 is interaction with DAB2; sequence GNPLYESYYK…PSERGTPIPD (354 aa). The EF-hand 1 domain occupies 48–83; it reads LSDIILGKIWDLADPEGKGFLDKQGFYVALRLVACA. Tyrosine 74 carries the phosphotyrosine modification. 2 positions are modified to phosphoserine: serine 107 and serine 108. The region spanning 127 to 215 is the EH 2 domain; the sequence is EKAKFDGIFE…PPLIPPSKRK (89 aa). Positions 159 to 194 constitute an EF-hand 2 domain; the sequence is LPLDVLGRVWDLSDIDKDGHLDRDEFAVAMHLVYRA. 5 residues coordinate Ca(2+): aspartate 172, aspartate 174, aspartate 176, histidine 178, and glutamate 183. A phosphoserine mark is found at serine 229, serine 244, serine 253, serine 255, and serine 259. The tract at residues 229-260 is disordered; that stretch reads SPPPKDSLRSTPSHGSVSSLNSTGSLSPKHSV. Positions 241–255 are enriched in low complexity; the sequence is SHGSVSSLNSTGSLS. EF-hand domains are found at residues 272-307 and 308-341; these read ADKM…SGLT and QNLL…IQQK. The EH 3 domain maps to 273–363; it reads DKMRFDEIFL…PDMVPPSERG (91 aa). Residue serine 360 is modified to Phosphoserine. Threonine 364 carries the phosphothreonine modification. A phosphoserine mark is found at serine 369 and serine 375. A coiled-coil region spans residues 384–551; the sequence is LDDISQEIAQ…RSKLSQLQES (168 aa). Position 558 is a phosphoserine (serine 558). Tyrosine 562 bears the Phosphotyrosine mark. Residue serine 610 is modified to Phosphoserine. The segment at 611–860 is disordered; sequence QELHPDPFQA…SSSGFADFTS (250 aa). A compositionally biased stretch (basic and acidic residues) spans 622 to 636; sequence DPFKSDPFKGADPFK. Over residues 643-652 the composition is skewed to polar residues; that stretch reads DPFSEQQTAA. A phosphoserine mark is found at serine 664, serine 670, serine 695, serine 715, and serine 732. Residues 682–696 are compositionally biased toward polar residues; it reads NDPFTSDPFTKNPSL. A compositionally biased stretch (low complexity) spans 703–743; sequence FESSDPFSSSSISSKGSDPFGTLDPFGSSSFSSAEGFADFS. Residues 776–790 are compositionally biased toward pro residues; that stretch reads ALPPKKPAPPRPKPP. At serine 791 the chain carries Phosphoserine. Over residues 791-802 the composition is skewed to polar residues; sequence SGQSTPVSQLGS. Phosphothreonine is present on threonine 795. Over residues 840–853 the composition is skewed to low complexity; it reads APSSSAKPPKTSSS. UIM domains lie at 863–882 and 889–907; these read NEEQ…EQER and QEQE…DMPA.

As to quaternary structure, interacts with EPS15, AGFG1/HRB and AGFG2/HRBL. Associates with the clathrin-associated adapter protein complex 2 (AP-2). Interacts with FCHO1. Interacts with FCHO2. Interacts (via EH domains) with DAB2. Interacts with UBQLN1 (via ubiquitin-like domain). Interacts with CAVIN3 (via leucine-zipper domain). Interacts with REPS2. Post-translationally, phosphorylated on tyrosine residues by EGFR.

Its subcellular location is the cell membrane. The protein resides in the nucleus. The protein localises to the membrane. It localises to the coated pit. Seems to be a constitutive component of clathrin-coated pits that is required for receptor-mediated endocytosis. Involved in endocytosis of integrin beta-1 (ITGB1) and transferrin receptor (TFR); internalization of ITGB1 as DAB2-dependent cargo but not TFR seems to require association with DAB2. This chain is Epidermal growth factor receptor substrate 15-like 1 (Eps15l1), found in Mus musculus (Mouse).